Consider the following 398-residue polypeptide: Mannitol-1-phosphate 5-dehydrogenase (398 aa).

10–21 (AVHFGAGNIGRG) contributes to the NAD(+) binding site. The active site involves K221.

It belongs to the mannitol dehydrogenase family. As to quaternary structure, monomer.

The enzyme catalyses D-mannitol 1-phosphate + NAD(+) = beta-D-fructose 6-phosphate + NADH + H(+). Catalyzes the NAD(H)-dependent interconversion of D-fructose 6-phosphate and D-mannitol 1-phosphate in the mannitol metabolic pathway. The sequence is that of Mannitol-1-phosphate 5-dehydrogenase from Chaetomium globosum (strain ATCC 6205 / CBS 148.51 / DSM 1962 / NBRC 6347 / NRRL 1970) (Soil fungus).